The following is a 157-amino-acid chain: Small ribosomal subunit protein uS7 (157 aa).

The protein belongs to the universal ribosomal protein uS7 family. Part of the 30S ribosomal subunit. Contacts proteins S9 and S11.

Functionally, one of the primary rRNA binding proteins, it binds directly to 16S rRNA where it nucleates assembly of the head domain of the 30S subunit. Is located at the subunit interface close to the decoding center, probably blocks exit of the E-site tRNA. This is Small ribosomal subunit protein uS7 from Psychrobacter cryohalolentis (strain ATCC BAA-1226 / DSM 17306 / VKM B-2378 / K5).